The primary structure comprises 308 residues: Probable GTP 3',8-cyclase (308 aa).

Residues 4-224 (RFGRPLEDLR…QIRKKHFRPR (221 aa)) enclose the Radical SAM core domain. Arg-13 serves as a coordination point for GTP. The [4Fe-4S] cluster site is built by Cys-20, Cys-24, and Cys-27. Residue Lys-60 participates in GTP binding. An S-adenosyl-L-methionine-binding site is contributed by Gly-64. Residue Thr-90 participates in GTP binding. Ser-114 is a binding site for S-adenosyl-L-methionine. GTP is bound at residue Lys-151. The [4Fe-4S] cluster site is built by Cys-245 and Cys-248. 250–252 (RIR) is a GTP binding site. Residue Cys-262 coordinates [4Fe-4S] cluster.

This sequence belongs to the radical SAM superfamily. MoaA family. It depends on [4Fe-4S] cluster as a cofactor.

The enzyme catalyses GTP + AH2 + S-adenosyl-L-methionine = (8S)-3',8-cyclo-7,8-dihydroguanosine 5'-triphosphate + 5'-deoxyadenosine + L-methionine + A + H(+). Its pathway is cofactor biosynthesis; molybdopterin biosynthesis. Functionally, catalyzes the cyclization of GTP to (8S)-3',8-cyclo-7,8-dihydroguanosine 5'-triphosphate. The protein is Probable GTP 3',8-cyclase of Saccharolobus islandicus (strain Y.N.15.51 / Yellowstone #2) (Sulfolobus islandicus).